The following is a 716-amino-acid chain: Fatty acid oxidation complex subunit alpha (716 aa).

The interval 1-189 is enoyl-CoA hydratase/isomerase; the sequence is MIYQSPTIQV…KVGAIDAVVA (189 aa). Residue Asp296 participates in substrate binding. The interval 311 to 716 is 3-hydroxyacyl-CoA dehydrogenase; that stretch reads QAVNSAAVLG…AATNGSYYPA (406 aa). NAD(+) contacts are provided by residues Met324, Asp343, 400–402, Lys407, and Ser429; that span reads VVE. Catalysis depends on His450, which acts as the For 3-hydroxyacyl-CoA dehydrogenase activity. Residue Asn453 participates in NAD(+) binding. Positions 500 and 660 each coordinate substrate.

This sequence in the N-terminal section; belongs to the enoyl-CoA hydratase/isomerase family. The protein in the C-terminal section; belongs to the 3-hydroxyacyl-CoA dehydrogenase family. Heterotetramer of two alpha chains (FadB) and two beta chains (FadA).

The enzyme catalyses a (3S)-3-hydroxyacyl-CoA + NAD(+) = a 3-oxoacyl-CoA + NADH + H(+). It carries out the reaction a (3S)-3-hydroxyacyl-CoA = a (2E)-enoyl-CoA + H2O. It catalyses the reaction a 4-saturated-(3S)-3-hydroxyacyl-CoA = a (3E)-enoyl-CoA + H2O. The catalysed reaction is (3S)-3-hydroxybutanoyl-CoA = (3R)-3-hydroxybutanoyl-CoA. The enzyme catalyses a (3Z)-enoyl-CoA = a 4-saturated (2E)-enoyl-CoA. It carries out the reaction a (3E)-enoyl-CoA = a 4-saturated (2E)-enoyl-CoA. The protein operates within lipid metabolism; fatty acid beta-oxidation. Functionally, involved in the aerobic and anaerobic degradation of long-chain fatty acids via beta-oxidation cycle. Catalyzes the formation of 3-oxoacyl-CoA from enoyl-CoA via L-3-hydroxyacyl-CoA. It can also use D-3-hydroxyacyl-CoA and cis-3-enoyl-CoA as substrate. This is Fatty acid oxidation complex subunit alpha from Shewanella loihica (strain ATCC BAA-1088 / PV-4).